The following is a 306-amino-acid chain: Curved DNA-binding protein (306 aa).

Residues D5 to W69 enclose the J domain.

It localises to the cytoplasm. It is found in the nucleoid. Functionally, DNA-binding protein that preferentially recognizes a curved DNA sequence. It is probably a functional analog of DnaJ; displays overlapping activities with DnaJ, but functions under different conditions, probably acting as a molecular chaperone in an adaptive response to environmental stresses other than heat shock. Lacks autonomous chaperone activity; binds native substrates and targets them for recognition by DnaK. Its activity is inhibited by the binding of CbpM. The protein is Curved DNA-binding protein of Citrobacter koseri (strain ATCC BAA-895 / CDC 4225-83 / SGSC4696).